Consider the following 623-residue polypeptide: Putative ABC transporter ATP-binding protein MG014 homolog (623 aa).

The 310-residue stretch at 16 to 325 (LILAPLFTFA…YIVLGLILTS (310 aa)) folds into the ABC transmembrane type-1 domain. A run of 6 helical transmembrane segments spans residues 27–47 (IIID…VFSI), 86–106 (VILL…CASI), 157–177 (FLRL…FAIA), 180–200 (SDMS…IGIL), 266–286 (NIPF…LLVF), and 307–327 (IFAF…TSLT). One can recognise an ABC transporter domain in the interval 365–611 (LEFKNVAFGL…CDIYVKMKQA (247 aa)). Residue 400–407 (GPTGSGKS) participates in ATP binding.

Belongs to the ABC transporter superfamily.

It localises to the cell membrane. This Mycoplasma pneumoniae (strain ATCC 29342 / M129 / Subtype 1) (Mycoplasmoides pneumoniae) protein is Putative ABC transporter ATP-binding protein MG014 homolog.